The following is a 187-amino-acid chain: Elongation factor P (187 aa).

This sequence belongs to the elongation factor P family.

The protein resides in the cytoplasm. It participates in protein biosynthesis; polypeptide chain elongation. Its function is as follows. Involved in peptide bond synthesis. Stimulates efficient translation and peptide-bond synthesis on native or reconstituted 70S ribosomes in vitro. Probably functions indirectly by altering the affinity of the ribosome for aminoacyl-tRNA, thus increasing their reactivity as acceptors for peptidyl transferase. This chain is Elongation factor P, found in Parvibaculum lavamentivorans (strain DS-1 / DSM 13023 / NCIMB 13966).